Here is a 118-residue protein sequence, read N- to C-terminus: Large ribosomal subunit protein bL20 (118 aa).

This sequence belongs to the bacterial ribosomal protein bL20 family.

In terms of biological role, binds directly to 23S ribosomal RNA and is necessary for the in vitro assembly process of the 50S ribosomal subunit. It is not involved in the protein synthesizing functions of that subunit. In Lacticaseibacillus casei (strain BL23) (Lactobacillus casei), this protein is Large ribosomal subunit protein bL20.